A 119-amino-acid polypeptide reads, in one-letter code: Aspartate 1-decarboxylase (119 aa).

The active-site Schiff-base intermediate with substrate; via pyruvic acid is the S25. The residue at position 25 (S25) is a Pyruvic acid (Ser). Position 57 (T57) interacts with substrate. Y58 serves as the catalytic Proton donor. Residue 73–75 (GAA) participates in substrate binding.

It belongs to the PanD family. Heterooctamer of four alpha and four beta subunits. The cofactor is pyruvate. Post-translationally, is synthesized initially as an inactive proenzyme, which is activated by self-cleavage at a specific serine bond to produce a beta-subunit with a hydroxyl group at its C-terminus and an alpha-subunit with a pyruvoyl group at its N-terminus.

The protein localises to the cytoplasm. The enzyme catalyses L-aspartate + H(+) = beta-alanine + CO2. It functions in the pathway cofactor biosynthesis; (R)-pantothenate biosynthesis; beta-alanine from L-aspartate: step 1/1. Catalyzes the pyruvoyl-dependent decarboxylation of aspartate to produce beta-alanine. The protein is Aspartate 1-decarboxylase of Desulfotalea psychrophila (strain LSv54 / DSM 12343).